Reading from the N-terminus, the 189-residue chain is Interferon alpha-B (189 aa).

An N-terminal signal peptide occupies residues 1-23 (MAPAWSFLLALLLLSCNAICSLG). 2 disulfides stabilise this stretch: Cys24-Cys122 and Cys52-Cys162.

It belongs to the alpha/beta interferon family.

Its subcellular location is the secreted. Functionally, produced by macrophages, IFN-alpha have antiviral activities. Interferon stimulates the production of two enzymes: a protein kinase and an oligoadenylate synthetase. This is Interferon alpha-B (IFNAB) from Bos taurus (Bovine).